The chain runs to 454 residues: Bifunctional protein GlmU (454 aa).

Positions 1-226 are pyrophosphorylase; sequence MSLEIVILAA…AMEVQGVNDR (226 aa). UDP-N-acetyl-alpha-D-glucosamine-binding positions include 8 to 11, Lys22, Gln73, 78 to 79, 99 to 101, Gly136, Glu151, Asn166, and Asn224; these read LAAG, GT, and YGD. Asp101 contacts Mg(2+). Asn224 lines the Mg(2+) pocket. The linker stretch occupies residues 227–247; that stretch reads MQQAQLERHYQRLRAEELMRQ. Positions 248–454 are N-acetyltransferase; the sequence is GVTLLDPQRL…NWKRPEKIKK (207 aa). Residues Arg330 and Lys348 each contribute to the UDP-N-acetyl-alpha-D-glucosamine site. Catalysis depends on His360, which acts as the Proton acceptor. Positions 363 and 374 each coordinate UDP-N-acetyl-alpha-D-glucosamine. Residues Ala377, 383-384, Ser402, Ala420, and Arg437 each bind acetyl-CoA; that span reads NY.

This sequence in the N-terminal section; belongs to the N-acetylglucosamine-1-phosphate uridyltransferase family. The protein in the C-terminal section; belongs to the transferase hexapeptide repeat family. In terms of assembly, homotrimer. Mg(2+) serves as cofactor.

The protein localises to the cytoplasm. It carries out the reaction alpha-D-glucosamine 1-phosphate + acetyl-CoA = N-acetyl-alpha-D-glucosamine 1-phosphate + CoA + H(+). The enzyme catalyses N-acetyl-alpha-D-glucosamine 1-phosphate + UTP + H(+) = UDP-N-acetyl-alpha-D-glucosamine + diphosphate. The protein operates within nucleotide-sugar biosynthesis; UDP-N-acetyl-alpha-D-glucosamine biosynthesis; N-acetyl-alpha-D-glucosamine 1-phosphate from alpha-D-glucosamine 6-phosphate (route II): step 2/2. It participates in nucleotide-sugar biosynthesis; UDP-N-acetyl-alpha-D-glucosamine biosynthesis; UDP-N-acetyl-alpha-D-glucosamine from N-acetyl-alpha-D-glucosamine 1-phosphate: step 1/1. Its pathway is bacterial outer membrane biogenesis; LPS lipid A biosynthesis. Functionally, catalyzes the last two sequential reactions in the de novo biosynthetic pathway for UDP-N-acetylglucosamine (UDP-GlcNAc). The C-terminal domain catalyzes the transfer of acetyl group from acetyl coenzyme A to glucosamine-1-phosphate (GlcN-1-P) to produce N-acetylglucosamine-1-phosphate (GlcNAc-1-P), which is converted into UDP-GlcNAc by the transfer of uridine 5-monophosphate (from uridine 5-triphosphate), a reaction catalyzed by the N-terminal domain. The protein is Bifunctional protein GlmU of Pseudomonas aeruginosa (strain ATCC 15692 / DSM 22644 / CIP 104116 / JCM 14847 / LMG 12228 / 1C / PRS 101 / PAO1).